The chain runs to 248 residues: tRNA (guanine-N(1)-)-methyltransferase (248 aa).

S-adenosyl-L-methionine contacts are provided by residues glycine 113 and 133-138 (IGDYVL).

The protein belongs to the RNA methyltransferase TrmD family. As to quaternary structure, homodimer.

Its subcellular location is the cytoplasm. It catalyses the reaction guanosine(37) in tRNA + S-adenosyl-L-methionine = N(1)-methylguanosine(37) in tRNA + S-adenosyl-L-homocysteine + H(+). Specifically methylates guanosine-37 in various tRNAs. This is tRNA (guanine-N(1)-)-methyltransferase from Shewanella loihica (strain ATCC BAA-1088 / PV-4).